Reading from the N-terminus, the 907-residue chain is Coatomer subunit beta'-1 (907 aa).

WD repeat units follow at residues 13 to 52, 55 to 94, 97 to 136, 140 to 180, 183 to 224, 227 to 266, 269 to 309, 351 to 389, and 461 to 501; these read QRSE…MVKS, VSEL…KVKV, AHTD…MCTQ, GHSH…PNFT, GHQK…CVQT, GHTH…LENT, YGLE…ASMD, SCDL…NRSF, and RIDV…SYLE. Composition is skewed to acidic residues over residues 850 to 866 and 874 to 887; these read ETED…EEVL and STDE…DEPE. Positions 850–887 are disordered; the sequence is ETEDALDENGEPDEEVLEENKVEESTDEAVEVDADEPE.

It belongs to the WD repeat COPB2 family. In terms of assembly, oligomeric complex that consists of at least the alpha, beta, beta', gamma, delta, epsilon and zeta subunits.

The protein localises to the cytoplasm. The protein resides in the golgi apparatus membrane. It localises to the cytoplasmic vesicle. Its subcellular location is the COPI-coated vesicle membrane. In terms of biological role, the coatomer is a cytosolic protein complex that binds to dilysine motifs and reversibly associates with Golgi non-clathrin-coated vesicles, which further mediate biosynthetic protein transport from the ER, via the Golgi up to the trans Golgi network. Coatomer complex is required for budding from Golgi membranes, and is essential for the retrograde Golgi-to-ER transport of dilysine-tagged proteins. In Oryza sativa subsp. japonica (Rice), this protein is Coatomer subunit beta'-1.